Reading from the N-terminus, the 232-residue chain is Chalcone synthase (232 aa).

Residue C7 is part of the active site.

Belongs to the thiolase-like superfamily. Chalcone/stilbene synthases family.

The enzyme catalyses (E)-4-coumaroyl-CoA + 3 malonyl-CoA + 3 H(+) = 2',4,4',6'-tetrahydroxychalcone + 3 CO2 + 4 CoA. It functions in the pathway secondary metabolite biosynthesis; flavonoid biosynthesis. Its function is as follows. The primary product of this enzyme is 4,2',4',6'-tetrahydroxychalcone (also termed naringenin-chalcone or chalcone) which can under specific conditions spontaneously isomerize into naringenin. The protein is Chalcone synthase (CHS) of Malus domestica (Apple).